A 199-amino-acid polypeptide reads, in one-letter code: IPVCPRGSVRCQVSLPDLFDRAVMLSHYIHSLSSDMFHEFNKQYALGRGFIPRAINSCHTSSISTPEDKDQAQQTHHEVLMDLILGLLRSWNDPLDHLASEVHSLPKAPSALLTKATEVKEENQRLLEGIEKIVDQVHPGAKENKAYSVWSGLPSLQTTDEDARLFAFYNLFRCLRRDSHKIDSYLKLLKCRIVYNNNC.

C4 and C11 are oxidised to a cystine. Phosphoserine occurs at positions 26, 34, and 90. 2 disulfide bridges follow: C58-C174 and C191-C199.

Belongs to the somatotropin/prolactin family. Interacts with PRLR.

The protein localises to the secreted. Its function is as follows. Prolactin acts primarily on the mammary gland by promoting lactation. The protein is Prolactin (PRL) of Loxodonta africana (African elephant).